The following is a 180-amino-acid chain: Nudix hydrolase 16, mitochondrial (180 aa).

Residues glycine 18–phenylalanine 162 enclose the Nudix hydrolase domain. Residue phenylalanine 60 participates in substrate binding. Glycine 63, glutamate 78, glutamate 82, and glutamate 144 together coordinate Mn(2+). Positions glycine 63–glycine 84 match the Nudix box motif.

This sequence belongs to the Nudix hydrolase family. It depends on Mg(2+) as a cofactor. Mn(2+) serves as cofactor. In terms of tissue distribution, expressed in roots, leaves, stems and inflorescences.

It localises to the mitochondrion. In terms of biological role, probably mediates the hydrolysis of some nucleoside diphosphate derivatives. The sequence is that of Nudix hydrolase 16, mitochondrial (NUDT16) from Arabidopsis thaliana (Mouse-ear cress).